A 229-amino-acid chain; its full sequence is DNA repair protein RecO (229 aa).

This sequence belongs to the RecO family.

In terms of biological role, involved in DNA repair and RecF pathway recombination. The protein is DNA repair protein RecO of Pseudomonas fluorescens (strain ATCC BAA-477 / NRRL B-23932 / Pf-5).